The chain runs to 431 residues: MASWLQIPKNSPFSLANIPFGIISSSKLSSRVPAIAIGDYALDLSKFASSGGFSQLPVIQPHLNVFNQSTLNAFAALGRPVHRQVREYIQKVFSTETPFPQILRDNAALQKEALLPLSEVTNHLPMQIGDYTDFYAGLNHAYNVGVLFRGPDNALQPNYKHLPVAYHGRASSVVTSGTPLHRPQGQILTNPAANPKLPTFSPCKKLDIELELAFFVSTPNDLGHPVHIDKAEDHIFGVVLMNDWSARDIQAWEYVPLGPFNAKNFGTTITPWVVLIDALEPFRTVGLEPGNRESLLPYLREKRADTAYDIPLEVEVTNAGGEPTVISHSNAKNLLYSFPQMLAHHTITGCNLNTGDLLGSGTISGKENQTEGSFLEQTNGKNPIKLADGSERLFLEDGDTVILRGMAGTEGNYVGFGDCAGTILPPVQLDL.

A Ca(2+)-binding site is contributed by Asp-133. Tyr-135 provides a ligand contact to substrate. His-140 serves as the catalytic Proton acceptor. Residue Arg-149 participates in substrate binding. Ca(2+) is bound by residues Glu-209, Glu-211, and Asp-243. Asp-243 is a binding site for Mg(2+). Gln-250 and Tyr-254 together coordinate substrate. Positions 263 and 267 each coordinate Mg(2+). Thr-362 contributes to the substrate binding site.

Belongs to the FAH family. Requires Ca(2+) as cofactor. It depends on Mg(2+) as a cofactor.

The enzyme catalyses 4-fumarylacetoacetate + H2O = acetoacetate + fumarate + H(+). The protein operates within amino-acid degradation; L-phenylalanine degradation; acetoacetate and fumarate from L-phenylalanine: step 6/6. Use of phenylalanine and phenylacetate as a carbon source. This Emericella nidulans (strain FGSC A4 / ATCC 38163 / CBS 112.46 / NRRL 194 / M139) (Aspergillus nidulans) protein is Fumarylacetoacetase (fahA).